Consider the following 24-residue polypeptide: Superoxide dismutase [Cu-Zn] (24 aa).

Belongs to the Cu-Zn superoxide dismutase family. As to quaternary structure, homodimer. The cofactor is Cu cation. Zn(2+) is required as a cofactor.

Its subcellular location is the cytoplasm. It carries out the reaction 2 superoxide + 2 H(+) = H2O2 + O2. Its function is as follows. Destroys radicals which are normally produced within the cells and which are toxic to biological systems. The protein is Superoxide dismutase [Cu-Zn] (sod1) of Aquarana catesbeiana (American bullfrog).